Consider the following 367-residue polypeptide: Aurora kinase (367 aa).

Positions Thr30–Arg49 are disordered. One can recognise a Protein kinase domain in the interval Phe109 to Ile360. Residues Leu115–Val123 and Lys138 contribute to the ATP site. The active-site Proton acceptor is Asp232.

This sequence belongs to the protein kinase superfamily. Ser/Thr protein kinase family. Aurora subfamily.

It is found in the nucleus. The protein resides in the cytoplasm. Its subcellular location is the cytoskeleton. The protein localises to the spindle. It localises to the chromosome. It is found in the centromere. The protein resides in the kinetochore. It catalyses the reaction L-seryl-[protein] + ATP = O-phospho-L-seryl-[protein] + ADP + H(+). The enzyme catalyses L-threonyl-[protein] + ATP = O-phospho-L-threonyl-[protein] + ADP + H(+). Functionally, component of the chromosomal passenger complex (CPC), a complex that acts as a key regulator of chromosome segregation and cytokinesis. Has a role in error-correction of aberrent kinetochore-microtubule attachments to ensure that sister kinetochores become bioriented and connect to opposite poles by promoting spindle assembly checkpoint signaling. This Eremothecium gossypii (strain ATCC 10895 / CBS 109.51 / FGSC 9923 / NRRL Y-1056) (Yeast) protein is Aurora kinase (IPL1).